Here is a 409-residue protein sequence, read N- to C-terminus: Elongation factor Tu, chloroplastic (409 aa).

Positions 10 to 214 (KPHVNIGTIG…AVDTYIPTPE (205 aa)) constitute a tr-type G domain. Residues 19–26 (GHVDHGKT) are G1. Position 19–26 (19–26 (GHVDHGKT)) interacts with GTP. Thr-26 serves as a coordination point for Mg(2+). The interval 60-64 (GITIN) is G2. Positions 81-84 (DCPG) are G3. Residues 81–85 (DCPGH) and 136–139 (NKED) contribute to the GTP site. The tract at residues 136–139 (NKED) is G4. The G5 stretch occupies residues 174-176 (SAL).

Belongs to the TRAFAC class translation factor GTPase superfamily. Classic translation factor GTPase family. EF-Tu/EF-1A subfamily.

It localises to the plastid. The protein localises to the chloroplast. It carries out the reaction GTP + H2O = GDP + phosphate + H(+). Functionally, GTP hydrolase that promotes the GTP-dependent binding of aminoacyl-tRNA to the A-site of ribosomes during protein biosynthesis. The chain is Elongation factor Tu, chloroplastic (tufA) from Porphyra purpurea (Red seaweed).